A 199-amino-acid chain; its full sequence is MSFIREILRAIRITLIFWLVTAIIYPLAILVVGQGLFPIQANGSIMENIEGTPIGSTLISQVFTSEKYFHSRPSAVRYSQGRKAKPTGISGGSNLAPSNPALLERIIEEANQLRDENVQPIADLIYSSGSGLDPHISVQAARQQLERVARARGVQPDEILLAINKFTDGRFLGIFGEPGVNVLRLNYALDLQDINRQQN.

The chain crosses the membrane as a helical span at residues 13–33 (ITLIFWLVTAIIYPLAILVVG).

Belongs to the KdpC family. The system is composed of three essential subunits: KdpA, KdpB and KdpC.

The protein localises to the cell inner membrane. Part of the high-affinity ATP-driven potassium transport (or Kdp) system, which catalyzes the hydrolysis of ATP coupled with the electrogenic transport of potassium into the cytoplasm. This subunit acts as a catalytic chaperone that increases the ATP-binding affinity of the ATP-hydrolyzing subunit KdpB by the formation of a transient KdpB/KdpC/ATP ternary complex. This Nostoc sp. (strain PCC 7120 / SAG 25.82 / UTEX 2576) protein is Potassium-transporting ATPase KdpC subunit 2.